Here is a 368-residue protein sequence, read N- to C-terminus: MYKTFFKLVFSRMDPERAHHLAFRWIRLAVRVPVLRTFVAAALAPRHKELRTEALGLRMHGPFGLAAGFDKNAVAIDGMAMLGFDHVEIGTVTGEPQPGNPKKRLFRLVADRALINRMGFNNDGSLAVAARLASRTPVFRTVVGVNIGKTKVVPEEEAVGDYVKSAERLAPHADYLVVNVSSPNTPGLRNLQATEALRPLLSAVREAADRAVTARRVPLLVKIAPDLADEDVDAVADLAVELGLDGIIATNTTIAREGLGLTSSPALVGETGGLSGAPLKARSLEVLRRLYARVGDRITLVGVGGVETAEDAWERILAGATLVQGYSAFIYEGPFWGRAMHKGLAARLRQSPYATLADAVGADVRKHS.

FMN contacts are provided by residues 67–71 (AGFDK) and Thr91. Lys71 serves as a coordination point for substrate. Residue 116-120 (NRMGF) coordinates substrate. Asn146 and Asn179 together coordinate FMN. A substrate-binding site is contributed by Asn179. Ser182 acts as the Nucleophile in catalysis. A substrate-binding site is contributed by Asn184. The FMN site is built by Lys222 and Thr250. 251-252 (NT) lines the substrate pocket. FMN-binding positions include Gly276, Gly305, and 326-327 (YS).

This sequence belongs to the dihydroorotate dehydrogenase family. Type 2 subfamily. Monomer. It depends on FMN as a cofactor.

Its subcellular location is the cell membrane. The enzyme catalyses (S)-dihydroorotate + a quinone = orotate + a quinol. Its pathway is pyrimidine metabolism; UMP biosynthesis via de novo pathway; orotate from (S)-dihydroorotate (quinone route): step 1/1. Its function is as follows. Catalyzes the conversion of dihydroorotate to orotate with quinone as electron acceptor. This chain is Dihydroorotate dehydrogenase (quinone), found in Streptomyces coelicolor (strain ATCC BAA-471 / A3(2) / M145).